The primary structure comprises 129 residues: Large ribosomal subunit protein bL12 (129 aa).

Residues T94–T113 form a disordered region.

This sequence belongs to the bacterial ribosomal protein bL12 family. As to quaternary structure, homodimer. Part of the ribosomal stalk of the 50S ribosomal subunit. Forms a multimeric L10(L12)X complex, where L10 forms an elongated spine to which 2 to 4 L12 dimers bind in a sequential fashion. Binds GTP-bound translation factors.

Functionally, forms part of the ribosomal stalk which helps the ribosome interact with GTP-bound translation factors. Is thus essential for accurate translation. This chain is Large ribosomal subunit protein bL12, found in Chlamydia pneumoniae (Chlamydophila pneumoniae).